A 342-amino-acid chain; its full sequence is Dihydroorotase (342 aa).

Zn(2+) is bound by residues His-13 and His-15. Substrate-binding positions include 15 to 17 (HLR) and Asn-41. Lys-98, His-135, and His-173 together coordinate Zn(2+). Lys-98 is modified (N6-carboxylysine). Position 135 (His-135) interacts with substrate. A substrate-binding site is contributed by Leu-218. Asp-246 is a binding site for Zn(2+). The active site involves Asp-246. The substrate site is built by His-250 and Ala-262.

Belongs to the metallo-dependent hydrolases superfamily. DHOase family. Class II DHOase subfamily. In terms of assembly, homodimer. Requires Zn(2+) as cofactor.

It carries out the reaction (S)-dihydroorotate + H2O = N-carbamoyl-L-aspartate + H(+). It participates in pyrimidine metabolism; UMP biosynthesis via de novo pathway; (S)-dihydroorotate from bicarbonate: step 3/3. Its function is as follows. Catalyzes the reversible cyclization of carbamoyl aspartate to dihydroorotate. In Vibrio vulnificus (strain CMCP6), this protein is Dihydroorotase.